Reading from the N-terminus, the 529-residue chain is Peptide chain release factor 3 (529 aa).

The tr-type G domain maps to 11–280 (AKRRTFAIIS…GLVEWAPAPM (270 aa)). Residues 20–27 (SHPDAGKT), 88–92 (DTPGH), and 142–145 (NKLD) each bind GTP.

It belongs to the TRAFAC class translation factor GTPase superfamily. Classic translation factor GTPase family. PrfC subfamily.

The protein resides in the cytoplasm. Functionally, increases the formation of ribosomal termination complexes and stimulates activities of RF-1 and RF-2. It binds guanine nucleotides and has strong preference for UGA stop codons. It may interact directly with the ribosome. The stimulation of RF-1 and RF-2 is significantly reduced by GTP and GDP, but not by GMP. The chain is Peptide chain release factor 3 from Shigella boydii serotype 18 (strain CDC 3083-94 / BS512).